A 546-amino-acid polypeptide reads, in one-letter code: Membrane protein insertase YidC (546 aa).

Residues 8 to 28 (ILLATVLSVGILILWQVIFPT) traverse the membrane as a helical segment. The interval 31 to 70 (APPKPAHPPAAEVAKPAAPASPAPGAAAPAVPAPPPDAPE) is disordered. Positions 39–60 (PAAEVAKPAAPASPAPGAAAPA) are enriched in low complexity. 5 consecutive transmembrane segments (helical) span residues 326–346 (IDYGAVAKFFALFARGLLYVM), 356–376 (WGVAIILLTVLVRLVLFPLTY), 422–442 (LGGCLPMLLQMPVWFALYAAL), 459–479 (LTAHDPYFILPIAMGISSFVM), and 498–518 (FFPGFFTVIMLFVPGGLTLYI).

Belongs to the OXA1/ALB3/YidC family. Type 1 subfamily. As to quaternary structure, interacts with the Sec translocase complex via SecD. Specifically interacts with transmembrane segments of nascent integral membrane proteins during membrane integration.

The protein resides in the cell inner membrane. In terms of biological role, required for the insertion and/or proper folding and/or complex formation of integral membrane proteins into the membrane. Involved in integration of membrane proteins that insert both dependently and independently of the Sec translocase complex, as well as at least some lipoproteins. Aids folding of multispanning membrane proteins. In Anaeromyxobacter dehalogenans (strain 2CP-1 / ATCC BAA-258), this protein is Membrane protein insertase YidC.